Consider the following 390-residue polypeptide: MAFDLAARLAERRAADLYRQRPLLESPQGPEVVVDGQRLLAFCSNDYLGLANHPEVIAAWQAGAERWGVGGGASHLVVGHSTPHHQVEEALAELTGRPRALLFSTGYMANLGAITALVGQGDTVLQDRLNHASLLDGGLLSGARFNRYLHNDPASLASRLDKAVGNTLVVTDGVFSMDGDLADLPALANVARARGAWLMVDDAHGLGTLGAKGGGIVEHFGLGVDDVPVLIGTLGKACGTAGAFVAGSEALIEALVQFARPYIYTTSQPPALACATLKSLELLRRETWRREHLAALIRQFREGAQQLGLQLMDSPTPIQPIVIGDSAQALRLSRLLRERGLLVTAIRPPTVPAGSARLRVTLSAAHSEAQVQLLLNALAECYPQLENADA.

R19 is a substrate binding site. 106–107 contacts pyridoxal 5'-phosphate; that stretch reads GY. H131 contacts substrate. 3 residues coordinate pyridoxal 5'-phosphate: S176, H204, and T233. K236 is modified (N6-(pyridoxal phosphate)lysine). T350 lines the substrate pocket.

The protein belongs to the class-II pyridoxal-phosphate-dependent aminotransferase family. BioF subfamily. As to quaternary structure, homodimer. It depends on pyridoxal 5'-phosphate as a cofactor.

It carries out the reaction 6-carboxyhexanoyl-[ACP] + L-alanine + H(+) = (8S)-8-amino-7-oxononanoate + holo-[ACP] + CO2. It functions in the pathway cofactor biosynthesis; biotin biosynthesis. Catalyzes the decarboxylative condensation of pimeloyl-[acyl-carrier protein] and L-alanine to produce 8-amino-7-oxononanoate (AON), [acyl-carrier protein], and carbon dioxide. This is 8-amino-7-oxononanoate synthase from Pseudomonas putida (strain ATCC 47054 / DSM 6125 / CFBP 8728 / NCIMB 11950 / KT2440).